The primary structure comprises 179 residues: MAKDVFNNSLAENVSFINTSGYYNNSENVTYINMSMNGSFSGILYVKSSYKNYTITINESGNFVFNDTTSPIEVELLNNYSDVILNYNLNESINNFSDTSYLILNESCKNSYFNVIYGNSPMLYVSLHDEDFNHNITIFNPQKGISSKGFVLTDIFITTPRMFYSSLNNSFEYQSWNIN.

This is an uncharacterized protein from Methanocaldococcus jannaschii (strain ATCC 43067 / DSM 2661 / JAL-1 / JCM 10045 / NBRC 100440) (Methanococcus jannaschii).